Here is a 93-residue protein sequence, read N- to C-terminus: UPF0223 protein LACR_0546 (93 aa).

The protein belongs to the UPF0223 family.

This chain is UPF0223 protein LACR_0546, found in Lactococcus lactis subsp. cremoris (strain SK11).